Reading from the N-terminus, the 196-residue chain is uncharacterized protein (196 aa).

The Macro domain maps to 1 to 183 (MREFHYGVHM…RFLFILSDLG (183 aa)).

The protein belongs to the MacroD-type family.

This is an uncharacterized protein from Thermoplasma acidophilum (strain ATCC 25905 / DSM 1728 / JCM 9062 / NBRC 15155 / AMRC-C165).